Consider the following 332-residue polypeptide: DNA double-strand break repair nuclease NurA (332 aa).

The Mn(2+) site is built by aspartate 57 and aspartate 132.

This sequence belongs to the NurA family. Mn(2+) serves as cofactor.

Involved in DNA double-strand break (DSB) repair. Probably acts with HerA to stimulate resection of the 5' strand and produce the long 3' single-strand that is required for RadA loading. Exhibits both single-stranded endonuclease activity and 5'-3' exonuclease activity on single-stranded and double-stranded DNA. The chain is DNA double-strand break repair nuclease NurA from Sulfolobus acidocaldarius (strain ATCC 33909 / DSM 639 / JCM 8929 / NBRC 15157 / NCIMB 11770).